Reading from the N-terminus, the 101-residue chain is ATP-dependent Clp protease adapter protein ClpS 1 (101 aa).

It belongs to the ClpS family. Binds to the N-terminal domain of the chaperone ClpA.

Involved in the modulation of the specificity of the ClpAP-mediated ATP-dependent protein degradation. The chain is ATP-dependent Clp protease adapter protein ClpS 1 from Bradyrhizobium diazoefficiens (strain JCM 10833 / BCRC 13528 / IAM 13628 / NBRC 14792 / USDA 110).